The following is a 168-amino-acid chain: Cyanate hydratase (168 aa).

Catalysis depends on residues Arg-91, Glu-94, and Ser-117.

It belongs to the cyanase family.

The enzyme catalyses cyanate + hydrogencarbonate + 3 H(+) = NH4(+) + 2 CO2. In terms of biological role, catalyzes the reaction of cyanate with bicarbonate to produce ammonia and carbon dioxide. This Arabidopsis thaliana (Mouse-ear cress) protein is Cyanate hydratase.